Here is a 175-residue protein sequence, read N- to C-terminus: Urease accessory protein UreE (175 aa).

A disordered region spans residues 151 to 175; the sequence is GGAYGGSPSHAHRHSHVHSHSHETP. Basic residues predominate over residues 160-169; it reads HAHRHSHVHS.

Belongs to the UreE family.

Its subcellular location is the cytoplasm. Functionally, involved in urease metallocenter assembly. Binds nickel. Probably functions as a nickel donor during metallocenter assembly. The sequence is that of Urease accessory protein UreE from Synechococcus sp. (strain WH7805).